Here is a 249-residue protein sequence, read N- to C-terminus: MPAPTPKRADGRGATELRPFSVDWDPMSFALSSLIVRTGRTAVLCSVSLEEDVPRWRRGNGCGWLSAEYRLLPGSTPQRQSRELMKLSGRTQEIQRLIGRSLRAVLDMDALGERTLLIDCDVIQADAGTRTASITGAWIALRRACDLLRSQGVLTQDPIRQQLAAVSVGLIDGTPLLDLDYSEDSRADVDLNVVTAGDGRLLELQGTAEQAPFSRSELDAMLNLAESGLQELMQGQRHALATAAGSAIS.

Phosphate is bound by residues Arg90 and 128 to 130 (GTR).

The protein belongs to the RNase PH family. In terms of assembly, homohexameric ring arranged as a trimer of dimers.

It carries out the reaction tRNA(n+1) + phosphate = tRNA(n) + a ribonucleoside 5'-diphosphate. In terms of biological role, phosphorolytic 3'-5' exoribonuclease that plays an important role in tRNA 3'-end maturation. Removes nucleotide residues following the 3'-CCA terminus of tRNAs; can also add nucleotides to the ends of RNA molecules by using nucleoside diphosphates as substrates, but this may not be physiologically important. Probably plays a role in initiation of 16S rRNA degradation (leading to ribosome degradation) during starvation. The sequence is that of Ribonuclease PH from Parasynechococcus marenigrum (strain WH8102).